The primary structure comprises 101 residues: NAD(P)H-quinone oxidoreductase subunit 4L, chloroplastic (101 aa).

3 consecutive transmembrane segments (helical) span residues 2–22, 27–46, and 61–81; these read MLEH…YGLI, MVRA…MNLI, and IFSI…PAIV.

This sequence belongs to the complex I subunit 4L family. In terms of assembly, NDH is composed of at least 16 different subunits, 5 of which are encoded in the nucleus.

Its subcellular location is the plastid. The protein localises to the chloroplast thylakoid membrane. The catalysed reaction is a plastoquinone + NADH + (n+1) H(+)(in) = a plastoquinol + NAD(+) + n H(+)(out). It catalyses the reaction a plastoquinone + NADPH + (n+1) H(+)(in) = a plastoquinol + NADP(+) + n H(+)(out). Functionally, NDH shuttles electrons from NAD(P)H:plastoquinone, via FMN and iron-sulfur (Fe-S) centers, to quinones in the photosynthetic chain and possibly in a chloroplast respiratory chain. The immediate electron acceptor for the enzyme in this species is believed to be plastoquinone. Couples the redox reaction to proton translocation, and thus conserves the redox energy in a proton gradient. In Drimys granadensis, this protein is NAD(P)H-quinone oxidoreductase subunit 4L, chloroplastic.